A 721-amino-acid polypeptide reads, in one-letter code: bZIP transcription factor 17 (721 aa).

Disordered stretches follow at residues M1–D51 and Q87–R232. Residues M1–A366 are Cytoplasmic-facing. Positions Q9–S25 are enriched in pro residues. Positions E125–L141 are enriched in basic and acidic residues. The segment covering P146–S170 has biased composition (polar residues). Over residues D204 to E216 the composition is skewed to basic and acidic residues. Positions D228 to L288 constitute a bZIP domain. The tract at residues K230–R261 is basic motif. Residues I267–I274 are leucine-zipper. The disordered stretch occupies residues P337–E359. The chain crosses the membrane as a helical span at residues S367–V387. Over N388 to T721 the chain is Lumenal. The span at T422 to G436 shows a compositional bias: polar residues. Positions T422–N462 are disordered. N450, N462, N609, and N617 each carry an N-linked (GlcNAc...) asparagine glycan. Residues I451–N462 show a composition bias toward polar residues. Residues R627–L630 carry the RRIL cleavage motif motif. N-linked (GlcNAc...) asparagine glycosylation is found at N643 and N651.

Belongs to the bZIP family. Interacts with BZIP28.

Its subcellular location is the endoplasmic reticulum membrane. It is found in the golgi apparatus membrane. The protein localises to the nucleus. In terms of biological role, transcriptional activator involved in salt and osmotic stress responses. Functions as a stress sensor and transducer in a signaling pathway that resembles an ER stress response. Following salt stress, BZIP17 is cleaved by SBT6.1 (S1P) and S2P at the C-terminus and the N-terminal bZIP component is translocated to the nucleus, where it activates the expression of salt stress response genes. Functions as a stress sensor and transducer in ER stress signaling pathway. ER stress induces proteolysis of BZIP17 by SBT6.1 (S1P) and S2P, and the N-terminal bZIP component is translocated to the nucleus, where it activates the expression and production of ER chaperones, as well as protein involved in brassinosteroid (BR) signaling, which is required for stress acclimation and growth. The sequence is that of bZIP transcription factor 17 from Arabidopsis thaliana (Mouse-ear cress).